The primary structure comprises 458 residues: Flavonol 3-O-glucosyltransferase F3GT2 (458 aa).

Residue His20 is the Proton acceptor of the active site. His20 provides a ligand contact to an anthocyanidin. Asp119 acts as the Charge relay in catalysis. Residue Thr141 coordinates UDP-alpha-D-glucose. An an anthocyanidin-binding site is contributed by His150. Residues Ala333, Gln335, His350, Trp353, Asn354, Ser355, and Glu358 each contribute to the UDP-alpha-D-glucose site. Residue Gly373 coordinates an anthocyanidin. UDP-alpha-D-glucose-binding residues include Asp374 and Gln375.

The protein belongs to the UDP-glycosyltransferase family. As to expression, expressed in ovaries.

It catalyses the reaction a flavonol + UDP-alpha-D-glucose = a flavonol 3-O-beta-D-glucoside + UDP + H(+). It participates in flavonoid metabolism. Catalyzes the glucosylation of quercetin. Preferentially uses UDP-glucose as sugar donor, but is also able to use UDP-gal and UDP-xyl. Is probably not required for the accumulation of anthocyanin in red-fleshed kiwifruit varieties. This chain is Flavonol 3-O-glucosyltransferase F3GT2, found in Actinidia chinensis var. chinensis (Chinese soft-hair kiwi).